The following is a 63-amino-acid chain: Large ribosomal subunit protein uL29 (63 aa).

Belongs to the universal ribosomal protein uL29 family.

The protein is Large ribosomal subunit protein uL29 of Yersinia enterocolitica serotype O:8 / biotype 1B (strain NCTC 13174 / 8081).